Consider the following 542-residue polypeptide: E3 ubiquitin-protein ligase RNF217 (542 aa).

Disordered stretches follow at residues 1 to 140 and 176 to 216; these read MGEE…TRVG and APAS…TDSL. Residues 37 to 50 are compositionally biased toward low complexity; sequence SARAPPLRAASAEP. Acidic residues predominate over residues 122-132; it reads DEQQEAPPGEE. Residues 185–196 are compositionally biased toward pro residues; the sequence is PASPPGAPPVLN. Residues 197 to 213 are compositionally biased toward low complexity; sequence PPSTRSSFPSPRLSLPT. The segment at 259-478 is TRIAD supradomain; the sequence is MVLMCRVCLE…LSIFGCKYRY (220 aa). C263, C266, C283, C286, C383, C386, H391, C396, C423, and C426 together coordinate Zn(2+). Residues 263-309 form an RING-type 1 zinc finger; sequence CRVCLEDKPIKPLPCCKKAVCEECLKVYLSAQVQLGQVEIKCPITEC. Residues 328–396 form an IBR-type zinc finger; sequence IKYKYFLELG…HSPWHEGVNC (69 aa). Residues 423 to 452 form an RING-type 2; atypical zinc finger; it reads CPKCKIHIQRTEGCDHMTCSQCNTNFCYRC. Residue C436 is part of the active site. Residues C441, C444, C449, C452, H465, and C474 each coordinate Zn(2+). Residues 503–523 form a helical membrane-spanning segment; sequence LIMVLGLALGAIAVVIGLFVF.

Belongs to the RBR family. RNF217 subfamily. Interacts with HAX1. Mainly expressed in testis and skeletal muscle.

It is found in the membrane. The protein localises to the cytoplasm. It carries out the reaction [E2 ubiquitin-conjugating enzyme]-S-ubiquitinyl-L-cysteine + [acceptor protein]-L-lysine = [E2 ubiquitin-conjugating enzyme]-L-cysteine + [acceptor protein]-N(6)-ubiquitinyl-L-lysine.. Its pathway is protein modification; protein ubiquitination. Its function is as follows. E3 ubiquitin-protein ligase which accepts ubiquitin from E2 ubiquitin-conjugating enzymes in the form of a thioester and then directly transfers the ubiquitin to targeted substrates. Mediates the degradation of the iron exporter ferroportin/SLC40A1 and thus regulates iron homeostasis. The sequence is that of E3 ubiquitin-protein ligase RNF217 (RNF217) from Homo sapiens (Human).